Reading from the N-terminus, the 393-residue chain is uncharacterized protein (393 aa).

A disordered region spans residues 164–183; it reads ASDPHPGKNSPASPTGENKE. A compositionally biased stretch (polar residues) spans 173-183; that stretch reads SPASPTGENKE.

This is an uncharacterized protein from Treponema pallidum (strain Nichols).